The sequence spans 104 residues: uncharacterized protein (104 aa).

This is an uncharacterized protein from Methanocaldococcus jannaschii (strain ATCC 43067 / DSM 2661 / JAL-1 / JCM 10045 / NBRC 100440) (Methanococcus jannaschii).